We begin with the raw amino-acid sequence, 113 residues long: Hydrogenase maturation factor HypA (113 aa).

A Ni(2+)-binding site is contributed by histidine 2. The Zn(2+) site is built by cysteine 73, cysteine 76, cysteine 89, and cysteine 92.

The protein belongs to the HypA/HybF family.

In terms of biological role, involved in the maturation of [NiFe] hydrogenases. Required for nickel insertion into the metal center of the hydrogenase. This Chlorobaculum tepidum (strain ATCC 49652 / DSM 12025 / NBRC 103806 / TLS) (Chlorobium tepidum) protein is Hydrogenase maturation factor HypA.